Consider the following 388-residue polypeptide: LL-diaminopimelate aminotransferase (388 aa).

Tyrosine 13, glycine 38, lysine 102, tyrosine 126, and asparagine 176 together coordinate substrate. Pyridoxal 5'-phosphate is bound by residues 101–102 (SK), tyrosine 126, asparagine 176, tyrosine 207, and 235–237 (SLS). At lysine 238 the chain carries N6-(pyridoxal phosphate)lysine. Arginine 246 is a binding site for pyridoxal 5'-phosphate. Arginine 364 lines the substrate pocket.

This sequence belongs to the class-I pyridoxal-phosphate-dependent aminotransferase family. LL-diaminopimelate aminotransferase subfamily. Homodimer. It depends on pyridoxal 5'-phosphate as a cofactor.

It catalyses the reaction (2S,6S)-2,6-diaminopimelate + 2-oxoglutarate = (S)-2,3,4,5-tetrahydrodipicolinate + L-glutamate + H2O + H(+). It functions in the pathway amino-acid biosynthesis; L-lysine biosynthesis via DAP pathway; LL-2,6-diaminopimelate from (S)-tetrahydrodipicolinate (aminotransferase route): step 1/1. Its function is as follows. Involved in the synthesis of meso-diaminopimelate (m-DAP or DL-DAP), required for both lysine and peptidoglycan biosynthesis. Catalyzes the direct conversion of tetrahydrodipicolinate to LL-diaminopimelate. In Dehalococcoides mccartyi (strain ATCC BAA-2100 / JCM 16839 / KCTC 5957 / BAV1), this protein is LL-diaminopimelate aminotransferase.